Reading from the N-terminus, the 198-residue chain is CASP-like protein 4B3 (198 aa).

The interval 1-27 is disordered; it reads MSSSGPPAGDGRDDASGPGPAGAAAAA. Over 1 to 51 the chain is Cytoplasmic; that stretch reads MSSSGPPAGDGRDDASGPGPAGAAAAADGSVPVSRSIVERWKMEPAAARAR. A compositionally biased stretch (low complexity) spans 16–27; the sequence is SGPGPAGAAAAA. Residues 52 to 72 traverse the membrane as a helical segment; it reads LLLRAVAWLFSLLALVVMASN. At 73–85 the chain is on the extracellular side; that stretch reads KHGHGGAQDFDNY. A helical membrane pass occupies residues 86–106; sequence PEYTYCLGISIIAVLYTTAQV. At 107-124 the chain is on the cytoplasmic side; the sequence is TRDVHRLSWGRDVIAGRK. Residues 125 to 145 form a helical membrane-spanning segment; that stretch reads AAAVVDFAGDQVVAYLLMSAL. The Extracellular portion of the chain corresponds to 146-166; the sequence is SAAAPVTDYMRQAADNLFTDS. The chain crosses the membrane as a helical span at residues 167–187; sequence AAAAISMAFLAFLAAGLSALV. Over 188-198 the chain is Cytoplasmic; that stretch reads SGYNLAMEVLV.

Belongs to the Casparian strip membrane proteins (CASP) family. Homodimer and heterodimers.

The protein resides in the cell membrane. This Oryza sativa subsp. japonica (Rice) protein is CASP-like protein 4B3.